The following is a 342-amino-acid chain: Replication factor C subunit 4 (342 aa).

ATP-binding positions include V24, V36, 61–68 (GMPGIGKT), N157, and R215.

It belongs to the activator 1 small subunits family. Heteropentamer of subunits rfc1, rfc2, rfc3, rfc4 and rfc5 that forms a complex (RFC) with PCNA in the presence of ATP. Two other complexes exist where rfc1 can be replaced by either ctf18 or elg1 to form the ctf18-RFC or the elg1-RFC complexes respectively.

It is found in the nucleus. Functionally, the elongation of primed DNA templates by DNA polymerase delta and epsilon requires the action of the accessory proteins PCNA and activator 1. The sequence is that of Replication factor C subunit 4 (rfc4) from Schizosaccharomyces pombe (strain 972 / ATCC 24843) (Fission yeast).